Reading from the N-terminus, the 180-residue chain is ATP-dependent protease subunit HslV (180 aa).

T7 is a catalytic residue. Positions 165, 168, and 171 each coordinate Na(+).

It belongs to the peptidase T1B family. HslV subfamily. A double ring-shaped homohexamer of HslV is capped on each side by a ring-shaped HslU homohexamer. The assembly of the HslU/HslV complex is dependent on binding of ATP.

The protein localises to the cytoplasm. It carries out the reaction ATP-dependent cleavage of peptide bonds with broad specificity.. Its activity is regulated as follows. Allosterically activated by HslU binding. Protease subunit of a proteasome-like degradation complex believed to be a general protein degrading machinery. In Bacillus cereus (strain ATCC 10987 / NRS 248), this protein is ATP-dependent protease subunit HslV.